The following is a 172-amino-acid chain: Male-specific submandibular salivary gland protein (172 aa).

Positions 1 to 15 are cleaved as a signal peptide; it reads MVKFLLLALALGVSC. The N-linked (GlcNAc...) asparagine glycan is linked to Asn-41. 2 disulfide bridges follow: Cys-60–Cys-64 and Cys-79–Cys-170.

It belongs to the calycin superfamily. Lipocalin family. In terms of processing, N-glycosylated. As to expression, expressed in acinar cells of the submandibular salivary gland from where it is secreted into saliva (at protein level). Also released from the submandibular salivary gland into blood and excreted in urine (at protein level). Expressed in the lacrimal gland from where it is secreted into tears (at protein level).

It is found in the secreted. It localises to the cytoplasm. In Mesocricetus auratus (Golden hamster), this protein is Male-specific submandibular salivary gland protein.